Consider the following 233-residue polypeptide: Glyceraldehyde-3-phosphate dehydrogenase A, chloroplastic (233 aa).

Residues 49–51 (SCT), T80, R95, 108–109 (TG), and R131 each bind D-glyceraldehyde 3-phosphate. C50 acts as the Nucleophile in catalysis. N213 provides a ligand contact to NADP(+).

It belongs to the glyceraldehyde-3-phosphate dehydrogenase family. Tetramer of either four A chains (GAPDH 2) or two A and two B chains (GAPDH 1).

Its subcellular location is the plastid. The protein localises to the chloroplast. The catalysed reaction is D-glyceraldehyde 3-phosphate + phosphate + NADP(+) = (2R)-3-phospho-glyceroyl phosphate + NADPH + H(+). Its pathway is carbohydrate biosynthesis; Calvin cycle. The protein is Glyceraldehyde-3-phosphate dehydrogenase A, chloroplastic (GAPA) of Sinapis alba (White mustard).